A 383-amino-acid chain; its full sequence is MATASPPFISTLSFTHSSFKTSSSSSFSPKLLRPLLSFSVKASRKQVEIVFDPDERLNKIGDDVDKEAPLSRLKLFSPCKINVFLRITGKREDGFHDLASLFHVISLGDTIKFSLSPSKSKDRLSTNVQGVPVDGRNLIIKALNLYRKKTGSNRFFWIHLDKKVPTGAGLGGGSSNAATALWAANELNGGLVTENELQDWSSEIGSDIPFFFSHGAAYCTGRGEIVQDLPPPFPLDLPMVLIKPREACSTAEVYKRLRLDQTSNINPLTLLENVTSNGVSQSICVNDLEPPAFSVLPSLKRLKQRIIASGRGEYDAVFMSGSGSTIIGIGSPDPPQFIYDDEEYKNVFLSEANFMTREANEWYKEPASANATTSSAESRMDFQ.

The transit peptide at 1 to 72 (MATASPPFIS…DVDKEAPLSR (72 aa)) directs the protein to the chloroplast. Position 165–175 (165–175 (PTGAGLGGGSS)) interacts with ATP.

The protein belongs to the GHMP kinase family. IspE subfamily. Expressed in leaves, stems, flowers and siliques.

It localises to the plastid. The protein resides in the chloroplast stroma. The catalysed reaction is 4-CDP-2-C-methyl-D-erythritol + ATP = 4-CDP-2-C-methyl-D-erythritol 2-phosphate + ADP + H(+). It participates in isoprenoid biosynthesis; isopentenyl diphosphate biosynthesis via DXP pathway; isopentenyl diphosphate from 1-deoxy-D-xylulose 5-phosphate: step 3/6. Functionally, enzyme of the plastid non-mevalonate pathway for isoprenoid biosynthesis that catalyzes the phosphorylation of the position 2 hydroxy group of 4-diphosphocytidyl-2C-methyl-D-erythritol. Is essential for chloroplast development. This is 4-diphosphocytidyl-2-C-methyl-D-erythritol kinase, chloroplastic (ISPE) from Arabidopsis thaliana (Mouse-ear cress).